A 365-amino-acid chain; its full sequence is Mitogen-activated protein kinase p38b (365 aa).

A Protein kinase domain is found at 24-311; it reads YQNLQPVGQG…AEQALAHPYM (288 aa). ATP contacts are provided by residues 30–38 and Lys53; that span reads VGQGAYGQV. The active-site Proton acceptor is Asp153. At Thr183 the chain carries Phosphothreonine. Residues 183 to 185 carry the TXY motif; it reads TGY. Phosphotyrosine is present on Tyr185.

It belongs to the protein kinase superfamily. CMGC Ser/Thr protein kinase family. MAP kinase subfamily. It depends on Mg(2+) as a cofactor. Post-translationally, dually phosphorylated on Thr-183 and Tyr-185, which activates the enzyme. As to expression, at mid-embryogenesis, highest expression is seen in developing anterior and posterior midguts. Almost ubiquitous expression throughout all development.

The protein localises to the nucleus. It catalyses the reaction L-seryl-[protein] + ATP = O-phospho-L-seryl-[protein] + ADP + H(+). It carries out the reaction L-threonyl-[protein] + ATP = O-phospho-L-threonyl-[protein] + ADP + H(+). Its activity is regulated as follows. Activated by threonine and tyrosine phosphorylation by Mkk3. Functionally, kinase involved in dpp signal transduction pathway in the process of wing morphogenesis when the levels of dpp are enhanced or inhibited. May down-regulate insect immunity gene expression after prolonged infection. This chain is Mitogen-activated protein kinase p38b, found in Drosophila melanogaster (Fruit fly).